The sequence spans 473 residues: Cysteine--tRNA ligase (473 aa).

Residue cysteine 30 participates in Zn(2+) binding. The 'HIGH' region motif lies at 32–42 (MTVYDYCHIGH). Cysteine 213, histidine 238, and glutamate 242 together coordinate Zn(2+). The short motif at 270–274 (KMSKS) is the 'KMSKS' region element. ATP is bound at residue lysine 273.

It belongs to the class-I aminoacyl-tRNA synthetase family. In terms of assembly, monomer. Zn(2+) is required as a cofactor.

It is found in the cytoplasm. The catalysed reaction is tRNA(Cys) + L-cysteine + ATP = L-cysteinyl-tRNA(Cys) + AMP + diphosphate. The sequence is that of Cysteine--tRNA ligase from Acinetobacter baumannii (strain SDF).